A 166-amino-acid polypeptide reads, in one-letter code: Protein FAM89A (166 aa).

This sequence belongs to the FAM89 family.

In Xenopus laevis (African clawed frog), this protein is Protein FAM89A (fam89a).